The sequence spans 343 residues: MSKDTLILAIESSCDETSASVIKNGKEILSNTVLSQIESHKRFGGVVPEVASRHHVEGITTTIEEALNTADTSMEEIDAVAVTEGPGLIGALLIGINAAKALAFAYDKPLVPVHHIAGHIYANNLEEPFEFPLMALIVSGGHTELVYMKDHLSFEVIGETRDDAVGEAYDKVARTIGLSYPGGPQVDKLAAEGEDTYDFPRVWLEQDSFDFSFSGLKSAVINKLHNLKQKNEAIIPENVATSFQNSVVEVLVGKAIKACETYNVHQLIVAGGVASNKGLRQELKKACAEHDIKLSIPSPKLCTDNAAMIGAAGHYMYEAGMRSDMHLNGHSSLDIEDFSVEKE.

Fe cation is bound by residues histidine 115 and histidine 119. Residues 137-141 (IVSGG), aspartate 170, glycine 183, aspartate 187, and asparagine 276 each bind substrate. Fe cation is bound at residue aspartate 304.

It belongs to the KAE1 / TsaD family. Requires Fe(2+) as cofactor.

The protein resides in the cytoplasm. It catalyses the reaction L-threonylcarbamoyladenylate + adenosine(37) in tRNA = N(6)-L-threonylcarbamoyladenosine(37) in tRNA + AMP + H(+). Required for the formation of a threonylcarbamoyl group on adenosine at position 37 (t(6)A37) in tRNAs that read codons beginning with adenine. Is involved in the transfer of the threonylcarbamoyl moiety of threonylcarbamoyl-AMP (TC-AMP) to the N6 group of A37, together with TsaE and TsaB. TsaD likely plays a direct catalytic role in this reaction. The protein is tRNA N6-adenosine threonylcarbamoyltransferase of Staphylococcus carnosus (strain TM300).